The primary structure comprises 347 residues: Histidinol-phosphate aminotransferase (347 aa).

Lys-209 is subject to N6-(pyridoxal phosphate)lysine.

Belongs to the class-II pyridoxal-phosphate-dependent aminotransferase family. Histidinol-phosphate aminotransferase subfamily. In terms of assembly, homodimer. Pyridoxal 5'-phosphate serves as cofactor.

It carries out the reaction L-histidinol phosphate + 2-oxoglutarate = 3-(imidazol-4-yl)-2-oxopropyl phosphate + L-glutamate. The protein operates within amino-acid biosynthesis; L-histidine biosynthesis; L-histidine from 5-phospho-alpha-D-ribose 1-diphosphate: step 7/9. This is Histidinol-phosphate aminotransferase from Syntrophotalea carbinolica (strain DSM 2380 / NBRC 103641 / GraBd1) (Pelobacter carbinolicus).